A 931-amino-acid chain; its full sequence is Bifunctional uridylyltransferase/uridylyl-removing enzyme (931 aa).

The uridylyltransferase stretch occupies residues 1 to 383 (MDSVTPNSRP…KTGNSWRRVP (383 aa)). The tract at residues 384 to 739 (ESDDFIVDNN…VGFDPARGVT (356 aa)) is uridylyl-removing. The 124-residue stretch at 499–622 (VDEHLIRCIG…VQSVEQMKLL (124 aa)) folds into the HD domain. ACT domains follow at residues 740–822 (ELTI…AVAR) and 851–931 (VIEV…QPAA).

It belongs to the GlnD family. It depends on Mg(2+) as a cofactor.

It catalyses the reaction [protein-PII]-L-tyrosine + UTP = [protein-PII]-uridylyl-L-tyrosine + diphosphate. The catalysed reaction is [protein-PII]-uridylyl-L-tyrosine + H2O = [protein-PII]-L-tyrosine + UMP + H(+). With respect to regulation, uridylyltransferase (UTase) activity is inhibited by glutamine, while glutamine activates uridylyl-removing (UR) activity. Its function is as follows. Modifies, by uridylylation and deuridylylation, the PII regulatory proteins (GlnB and homologs), in response to the nitrogen status of the cell that GlnD senses through the glutamine level. Under low glutamine levels, catalyzes the conversion of the PII proteins and UTP to PII-UMP and PPi, while under higher glutamine levels, GlnD hydrolyzes PII-UMP to PII and UMP (deuridylylation). Thus, controls uridylylation state and activity of the PII proteins, and plays an important role in the regulation of nitrogen fixation and metabolism. The protein is Bifunctional uridylyltransferase/uridylyl-removing enzyme of Bradyrhizobium sp. (strain BTAi1 / ATCC BAA-1182).